Reading from the N-terminus, the 885-residue chain is DNA mismatch repair protein MutS (885 aa).

An ATP-binding site is contributed by 640–647 (GPNMGGKS).

It belongs to the DNA mismatch repair MutS family.

This protein is involved in the repair of mismatches in DNA. It is possible that it carries out the mismatch recognition step. This protein has a weak ATPase activity. This chain is DNA mismatch repair protein MutS, found in Variovorax paradoxus (strain S110).